The chain runs to 402 residues: MLILRKDSKFDRKSIEELKELAEVLYNPVKTIVQIRKADPKYQIGSGLVERIAENIKEENIEIVIVGNILTPSQKYNLAKKFKVEVIDKIELVLRIFYKHARTKEAQLQVRLAELQYELPRAREKVRLAKMGEQPGFGGYGDYEVEKYYQKVKREIATIKRKLEKLREHRRVARKGRAKFDTVGLIGYTNAGKTSLLNALTGENKESKNQVFTTLTTTTRAIKGIKRKILVTDTVGFIDDLPPFMIEAFLSTIEESADSDLILIVVDASDDIEEIKRKLKVNHEILSKINCKAPIITVFNKVDKITKEKKRKILEELDRYIVNPIFVSAKYDINMDLLKEMIIEHLNLSIGTIETDNPRLISYLYENTEIIEDILEDNKHIITFRAKERDVNRILKLHKSAV.

One can recognise a Hflx-type G domain in the interval 181-350; the sequence is DTVGLIGYTN…MIIEHLNLSI (170 aa). Residues 187 to 194, 212 to 216, 233 to 236, 300 to 303, and 328 to 330 contribute to the GTP site; these read GYTNAGKT, FTTLT, DTVG, NKVD, and SAK. Thr194 and Thr214 together coordinate Mg(2+).

The protein belongs to the TRAFAC class OBG-HflX-like GTPase superfamily. HflX GTPase family. Monomer. Associates with the 50S ribosomal subunit. Requires Mg(2+) as cofactor.

The protein localises to the cytoplasm. Its function is as follows. GTPase that associates with the 50S ribosomal subunit and may have a role during protein synthesis or ribosome biogenesis. This Methanocaldococcus jannaschii (strain ATCC 43067 / DSM 2661 / JAL-1 / JCM 10045 / NBRC 100440) (Methanococcus jannaschii) protein is GTPase HflX.